Here is a 205-residue protein sequence, read N- to C-terminus: High frequency lysogenization protein HflD homolog (205 aa).

It belongs to the HflD family.

Its subcellular location is the cytoplasm. The protein localises to the cell inner membrane. The protein is High frequency lysogenization protein HflD homolog of Shewanella oneidensis (strain ATCC 700550 / JCM 31522 / CIP 106686 / LMG 19005 / NCIMB 14063 / MR-1).